Consider the following 461-residue polypeptide: GTPase Der (461 aa).

EngA-type G domains are found at residues 2–164 (QSII…NENF) and 197–369 (IKVG…ANFT). GTP-binding positions include 8 to 15 (GKPNVGKS), 55 to 59 (DSGGL), 116 to 119 (NKID), 203 to 210 (GRVNVGKS), 250 to 254 (DTAGI), and 314 to 317 (NKWD). A KH-like domain is found at 370 to 454 (QKIPTAKLNA…PLIIVSRKKG (85 aa)).

It belongs to the TRAFAC class TrmE-Era-EngA-EngB-Septin-like GTPase superfamily. EngA (Der) GTPase family. In terms of assembly, associates with the 50S ribosomal subunit.

In terms of biological role, GTPase that plays an essential role in the late steps of ribosome biogenesis. This chain is GTPase Der, found in Campylobacter lari (strain RM2100 / D67 / ATCC BAA-1060).